A 271-amino-acid chain; its full sequence is Phosphate import ATP-binding protein PstB 2 (271 aa).

An ABC transporter domain is found at 25–266; that stretch reads MATEDLHVYY…PQEKQTEDYI (242 aa). 57–64 is an ATP binding site; that stretch reads GPSGCGKS.

This sequence belongs to the ABC transporter superfamily. Phosphate importer (TC 3.A.1.7) family. As to quaternary structure, the complex is composed of two ATP-binding proteins (PstB), two transmembrane proteins (PstC and PstA) and a solute-binding protein (PstS).

The protein localises to the cell membrane. The enzyme catalyses phosphate(out) + ATP + H2O = ADP + 2 phosphate(in) + H(+). Part of the ABC transporter complex PstSACB involved in phosphate import. Responsible for energy coupling to the transport system. This is Phosphate import ATP-binding protein PstB 2 from Listeria monocytogenes serovar 1/2a (strain ATCC BAA-679 / EGD-e).